The primary structure comprises 1246 residues: Stromal processing peptidase, chloroplastic (1246 aa).

Residues 1 to 136 constitute a chloroplast transit peptide; sequence MASFPSPPLA…AKIRRRHVLH (136 aa). Histidine 228 contacts Zn(2+). Glutamate 231 serves as the catalytic Proton acceptor. A Zn(2+)-binding site is contributed by histidine 232. Glutamate 302 is a catalytic residue. Glutamate 309 provides a ligand contact to Zn(2+).

The protein belongs to the peptidase M16 family. The cofactor is Zn(2+). In terms of tissue distribution, widely expressed.

The protein localises to the plastid. The protein resides in the chloroplast stroma. Its function is as follows. Cleaves presequences (transit peptides) from chloroplastic protein precursors. Initially recognizes a precursor by binding to the C-terminus of its transit peptide and then removes the transit peptide in a single endoproteolytic step. In a next step, pursues the cleavage of transit peptide to a subfragment form. The chain is Stromal processing peptidase, chloroplastic from Oryza sativa subsp. indica (Rice).